A 447-amino-acid polypeptide reads, in one-letter code: tRNA modification GTPase MnmE (447 aa).

3 residues coordinate (6S)-5-formyl-5,6,7,8-tetrahydrofolate: Arg24, Glu81, and Lys120. A TrmE-type G domain is found at 216 to 371 (GLNVVIAGKP…LRKELSDIAG (156 aa)). Asn226 contacts K(+). GTP is bound by residues 226-231 (NAGKSS), 245-251 (TDIAGTT), and 270-273 (DTAG). Ser230 provides a ligand contact to Mg(2+). Thr245, Ile247, and Thr250 together coordinate K(+). Mg(2+) is bound at residue Thr251. Lys447 provides a ligand contact to (6S)-5-formyl-5,6,7,8-tetrahydrofolate.

This sequence belongs to the TRAFAC class TrmE-Era-EngA-EngB-Septin-like GTPase superfamily. TrmE GTPase family. As to quaternary structure, homodimer. Heterotetramer of two MnmE and two MnmG subunits. K(+) is required as a cofactor.

Its subcellular location is the cytoplasm. Functionally, exhibits a very high intrinsic GTPase hydrolysis rate. Involved in the addition of a carboxymethylaminomethyl (cmnm) group at the wobble position (U34) of certain tRNAs, forming tRNA-cmnm(5)s(2)U34. The sequence is that of tRNA modification GTPase MnmE from Ruthia magnifica subsp. Calyptogena magnifica.